Reading from the N-terminus, the 252-residue chain is Triosephosphate isomerase (252 aa).

9 to 11 (NWK) contacts substrate. The Electrophile role is filled by H96. E166 serves as the catalytic Proton acceptor. Substrate contacts are provided by residues G172, S212, and 233-234 (GG).

The protein belongs to the triosephosphate isomerase family. As to quaternary structure, homodimer.

The protein localises to the cytoplasm. The catalysed reaction is D-glyceraldehyde 3-phosphate = dihydroxyacetone phosphate. Its pathway is carbohydrate biosynthesis; gluconeogenesis. It functions in the pathway carbohydrate degradation; glycolysis; D-glyceraldehyde 3-phosphate from glycerone phosphate: step 1/1. Its function is as follows. Involved in the gluconeogenesis. Catalyzes stereospecifically the conversion of dihydroxyacetone phosphate (DHAP) to D-glyceraldehyde-3-phosphate (G3P). The polypeptide is Triosephosphate isomerase (Prosthecochloris aestuarii (strain DSM 271 / SK 413)).